Reading from the N-terminus, the 103-residue chain is Pterin-4-alpha-carbinolamine dehydratase 2 (103 aa).

This sequence belongs to the pterin-4-alpha-carbinolamine dehydratase family. In terms of tissue distribution, highest level found in the kidney, liver, heart and ovarian follicles.

The enzyme catalyses (4aS,6R)-4a-hydroxy-L-erythro-5,6,7,8-tetrahydrobiopterin = (6R)-L-erythro-6,7-dihydrobiopterin + H2O. Functionally, involved in tetrahydrobiopterin biosynthesis. Seems to both prevent the formation of 7-pterins and accelerate the formation of quinonoid-BH2. Its function is as follows. Regulates the dimerization of homeodomain protein HNF-1-alpha and enhances its transcriptional activity. The sequence is that of Pterin-4-alpha-carbinolamine dehydratase 2 (PCBD2) from Gallus gallus (Chicken).